A 199-amino-acid polypeptide reads, in one-letter code: Protein GrpE (199 aa).

The interval 20–52 (YKVENEILEEETDEESQHQEPALGHPSYTALEE) is disordered.

The protein belongs to the GrpE family. As to quaternary structure, homodimer.

It is found in the cytoplasm. Functionally, participates actively in the response to hyperosmotic and heat shock by preventing the aggregation of stress-denatured proteins, in association with DnaK and GrpE. It is the nucleotide exchange factor for DnaK and may function as a thermosensor. Unfolded proteins bind initially to DnaJ; upon interaction with the DnaJ-bound protein, DnaK hydrolyzes its bound ATP, resulting in the formation of a stable complex. GrpE releases ADP from DnaK; ATP binding to DnaK triggers the release of the substrate protein, thus completing the reaction cycle. Several rounds of ATP-dependent interactions between DnaJ, DnaK and GrpE are required for fully efficient folding. This Legionella pneumophila (strain Corby) protein is Protein GrpE.